The following is a 422-amino-acid chain: Adenosylhomocysteinase (422 aa).

Substrate contacts are provided by Asp-129 and Glu-154. Position 155–157 (155–157 (TTT)) interacts with NAD(+). Residues Lys-184 and Asp-188 each coordinate substrate. Residues Asn-189, 218 to 223 (GYGWCG), Glu-241, Asn-276, 297 to 299 (AGH), and Asn-344 each bind NAD(+).

The protein belongs to the adenosylhomocysteinase family. NAD(+) is required as a cofactor.

The protein resides in the cytoplasm. The catalysed reaction is S-adenosyl-L-homocysteine + H2O = L-homocysteine + adenosine. It functions in the pathway amino-acid biosynthesis; L-homocysteine biosynthesis; L-homocysteine from S-adenosyl-L-homocysteine: step 1/1. Functionally, may play a key role in the regulation of the intracellular concentration of adenosylhomocysteine. This chain is Adenosylhomocysteinase, found in Pyrococcus abyssi (strain GE5 / Orsay).